The sequence spans 361 residues: Peptide chain release factor 1 (361 aa).

Residue glutamine 237 is modified to N5-methylglutamine. The segment at 285-306 (QAEQSAQQTEQRRQLVGSGDRS) is disordered.

The protein belongs to the prokaryotic/mitochondrial release factor family. In terms of processing, methylated by PrmC. Methylation increases the termination efficiency of RF1.

Its subcellular location is the cytoplasm. Functionally, peptide chain release factor 1 directs the termination of translation in response to the peptide chain termination codons UAG and UAA. The sequence is that of Peptide chain release factor 1 from Alkalilimnicola ehrlichii (strain ATCC BAA-1101 / DSM 17681 / MLHE-1).